A 161-amino-acid polypeptide reads, in one-letter code: RNA pyrophosphohydrolase (161 aa).

Residues proline 12–lysine 154 enclose the Nudix hydrolase domain. Positions glycine 46–glycine 67 match the Nudix box motif.

This sequence belongs to the Nudix hydrolase family. RppH subfamily. The cofactor is a divalent metal cation.

In terms of biological role, accelerates the degradation of transcripts by removing pyrophosphate from the 5'-end of triphosphorylated RNA, leading to a more labile monophosphorylated state that can stimulate subsequent ribonuclease cleavage. The polypeptide is RNA pyrophosphohydrolase (Rickettsia rickettsii (strain Iowa)).